Consider the following 294-residue polypeptide: MPELPEVEVVRRGLAEHVAGRVVGAVTITHPRSVRRHLAGSADLAARMTGRRVRAAQRRGKYLWLTFDEPGAADETALDAALVVHLGMSGQMLVQPAAAPVEKHAHIRAALDDGSELRFVDQRTFGGWALAPLAEVDGSLVPEPVAHIARDPLDPRFDAESVVAAIRAKNSEIKRVLLDQTVVSGIGNIYADESLWRAGINGNRLASGLTRPAVRRLLAEVRAVMLEALAAGGTSFDALYVNVNGQSGYFERALAVYGRQDEPCRRCGAPIVREKFMNRSSYSCPRCQPRPRRR.

Pro2 (schiff-base intermediate with DNA) is an active-site residue. The active-site Proton donor is Glu3. Lys61 serves as the catalytic Proton donor; for beta-elimination activity. Residues His104, Arg123, and Lys169 each contribute to the DNA site. The FPG-type zinc finger occupies Ala255 to Pro289. The active-site Proton donor; for delta-elimination activity is Arg279.

This sequence belongs to the FPG family. As to quaternary structure, monomer. It depends on Zn(2+) as a cofactor.

The enzyme catalyses Hydrolysis of DNA containing ring-opened 7-methylguanine residues, releasing 2,6-diamino-4-hydroxy-5-(N-methyl)formamidopyrimidine.. It catalyses the reaction 2'-deoxyribonucleotide-(2'-deoxyribose 5'-phosphate)-2'-deoxyribonucleotide-DNA = a 3'-end 2'-deoxyribonucleotide-(2,3-dehydro-2,3-deoxyribose 5'-phosphate)-DNA + a 5'-end 5'-phospho-2'-deoxyribonucleoside-DNA + H(+). In terms of biological role, involved in base excision repair of DNA damaged by oxidation or by mutagenic agents. Acts as a DNA glycosylase that recognizes and removes damaged bases. Has a preference for oxidized purines, such as 7,8-dihydro-8-oxoguanine (8-oxoG). Has AP (apurinic/apyrimidinic) lyase activity and introduces nicks in the DNA strand. Cleaves the DNA backbone by beta-delta elimination to generate a single-strand break at the site of the removed base with both 3'- and 5'-phosphates. This is Formamidopyrimidine-DNA glycosylase from Nocardia farcinica (strain IFM 10152).